The chain runs to 89 residues: Small ribosomal subunit protein uS15 (89 aa).

It belongs to the universal ribosomal protein uS15 family. As to quaternary structure, part of the 30S ribosomal subunit. Forms a bridge to the 50S subunit in the 70S ribosome, contacting the 23S rRNA.

Functionally, one of the primary rRNA binding proteins, it binds directly to 16S rRNA where it helps nucleate assembly of the platform of the 30S subunit by binding and bridging several RNA helices of the 16S rRNA. Forms an intersubunit bridge (bridge B4) with the 23S rRNA of the 50S subunit in the ribosome. This is Small ribosomal subunit protein uS15 from Burkholderia mallei (strain NCTC 10247).